The sequence spans 238 residues: Large ribosomal subunit protein uL2 (238 aa).

Positions His198–Ala238 are disordered. Residues Gln206–Arg216 show a composition bias toward polar residues. Basic residues predominate over residues Lys223–Ala238.

This sequence belongs to the universal ribosomal protein uL2 family. In terms of assembly, part of the 50S ribosomal subunit. Forms a bridge to the 30S subunit in the 70S ribosome.

One of the primary rRNA binding proteins. Required for association of the 30S and 50S subunits to form the 70S ribosome, for tRNA binding and peptide bond formation. It has been suggested to have peptidyltransferase activity; this is somewhat controversial. Makes several contacts with the 16S rRNA in the 70S ribosome. This chain is Large ribosomal subunit protein uL2, found in Sulfolobus acidocaldarius (strain ATCC 33909 / DSM 639 / JCM 8929 / NBRC 15157 / NCIMB 11770).